The following is a 720-amino-acid chain: Inactive serine protease PAMR1 (720 aa).

The first 21 residues, M1–S21, serve as a signal peptide directing secretion. Cystine bridges form between C128-C150, C177-C199, C239-C250, C244-C260, C262-C271, C280-C329, C315-C342, and C414-C442. The 109-residue stretch at C128–I236 folds into the CUB domain. An EGF-like domain is found at E235–E272. Sushi domains lie at R278 to K344 and A387 to P444. The region spanning I445–K720 is the Peptidase S1 domain. N-linked (GlcNAc...) asparagine glycosylation occurs at N451. Residues C489 and C505 are joined by a disulfide bond. N614 carries N-linked (GlcNAc...) asparagine glycosylation. 2 cysteine pairs are disulfide-bonded: C630-C649 and C661-C697.

The protein belongs to the peptidase S1 family.

It localises to the secreted. May play a role in regeneration of skeletal muscle. This chain is Inactive serine protease PAMR1 (PAMR1), found in Pongo abelii (Sumatran orangutan).